We begin with the raw amino-acid sequence, 1183 residues long: Collagen adhesin (1183 aa).

The signal sequence occupies residues M1–A29. Positions I151–N318 are collagen-binding. 7 consecutive cross-links (isoaspartyl lysine isopeptide (Lys-Asn)) follow at residues K176–N293, K541–N618, K631–N715, K728–N805, K818–N902, K915–N992, and K1005–N1089. One copy of the B1 repeat lies at E533–P719. Residues E533 to P1093 form a 3 X 187 AA approximate tandem repeats region. The B2 repeat unit spans residues E720–P906. A B3 repeat occupies E907–P1093. The interval T1074–E1150 is disordered. Composition is skewed to basic and acidic residues over residues Y1101 to N1118 and K1127 to E1150. The LPXTG sorting signal motif lies at L1151–G1155. T1154 carries the pentaglycyl murein peptidoglycan amidated threonine modification. A propeptide spans G1155–S1183 (removed by sortase).

Interacts (via N-terminus) with type I collagen. Interacts with host C1QA.

It localises to the secreted. It is found in the cell wall. In terms of biological role, collagen-binding adhesin that mediates bacterial adherence to collagenous tissues such as cartilage. Participates in the infectious process by acting as a virulence factor in many different animal models of staphylococcal infections including arthritis, endocarditis and keratitis. Inhibits the activation of the classical complement pathway by interacting with host C1q and interfering with the association between host C1r with C1q. This Staphylococcus aureus protein is Collagen adhesin (cna).